The primary structure comprises 91 residues: MARSLKKAPFVDDHLMKKVLAIIENKSPKRPIKTWSRRSTIYPEFIGLTFQVHNGHAFIDVFVTNDMVGHKLGEFAPTRTFNGHGADKGKK.

Belongs to the universal ribosomal protein uS19 family.

Protein S19 forms a complex with S13 that binds strongly to the 16S ribosomal RNA. The chain is Small ribosomal subunit protein uS19 from Metamycoplasma hominis (strain ATCC 23114 / DSM 25592 / NBRC 14850 / NCTC 10111 / PG21) (Mycoplasma hominis).